We begin with the raw amino-acid sequence, 1396 residues long: MRLSSEAKIAESGGQPPTAGSRSETGSESTEAESADPKAQKWYQRSLNPLRWQKIPPVPEERTVSREYGASFFSIASFQWMAPLMKVGYLRPLELQDIWTVNPDREVDVLTKRFEVSLEKRTNAGAKRPLLWALYDTFRFEFLLGGFCHLISSLLIVFAPYLTRYQIAFATEAYVAQRSGQPAPRIGRGMGFVVGITVMQAIQSLCTNQFLYRGQMVGGQIRAVLILQIFNKAMKLSGRAKAGGVQSPEQQEKIKELKAAKDQALKKPGSPPADDKGWGNGRIVALMSIDVDRINLACGMFHISWTAPVSIIVALILLLVNLTYSALAGFGLLVIGMPFLTYAVRFLFKRRRNINKLTDQRVSLTQEILQGVRFVKFFGWESSFLDRLKEIRHHEIRSIQTLLAVRNGILCVSMAIPVFASMLSFITYALSNHVLDPAPIFSSLALFNSLRMPLNLLPLVLGQITDAWTALNRIQEFIVAEEQKEDIERDEHMPEAVRMDRASFTWERKAADKEAEKVEKKANPRRTEPKSEAPTDSAESDEPFQLRDMTLDIRRDELVAVIGTVGSGKSSLLAALAGDMRLTDGSVRLSTSRAFCPQYTWIQNTSLRDNILFGKDYDEKWYDQVIDACALKPDLEILPNGDATEIGERGITISGGQKQRLNIARAIYFNAELVLLDDPLSAVDAHVGRHIMDKAICGLLKGRCRILATHQLHVLSRCDRIVVMDDGRIHAVGTFDELSRDNDLFKQLMSTASQDSKEDEEEATEVVEEEAEKQAQQEPTKPAAALMQQEEKATDSVGWTVWKAYIRASGSYFNALAILFLLAFANVVNVWTNLWLSYWTSNHYPSLSTGQYIGIYAGLGAGSALTMFIFSTYMSTAGTNASRQMLQLAMTRVLRAPMSFFDTTPLGRITNRFSKDIGVMDNELCDAMRMYAITITMIVSIMILIIVFYHYFAIALVPLFLLFLTASNYYRSSAREMKRHESILRSAVYARFSEAITGTASIRAYGVQNQFRSSLRDSVDTMNGAYFLTFSNQRWLSVRLDAVAVLLVFVTGVLVVTSRFDVSPSISGLVLSYILAIAQMLQFTVRQLAEVENNMNATERVHYYGTQLEEEAPAHIPSNPVPESWPPHGEITFDNVAMRYRPGLPLVLKNLSMNISGGERIGIVGRTGAGKSSIMSALFRLTELSSGRITIDGVDISTIGLHDLRSRLAIIPQDPTLFRGSIRSNLDPFNEHSDLELWDALRKAHLIDSDTKDSAVDASNPNGNANAQRLTLDTAVDEEGLTFSLGQRQLMALARALVRNARIIICDEATSSVDFATDQRIQETMAQGFEGKTLLCIAHRLKTIIHYDRICVMDQGSIAEIDTPLNLWEKEDGIFRAMCERSGISREDIVGQVEKE.

Residues 1–40 (MRLSSEAKIAESGGQPPTAGSRSETGSESTEAESADPKAQ) form a disordered region. Residues 18–29 (TAGSRSETGSES) show a composition bias toward low complexity. 3 consecutive transmembrane segments (helical) span residues 142–162 (FLLG…APYL), 191–211 (GFVV…NQFL), and 300–320 (MFHI…LLLV). The ABC transmembrane type-1 1 domain occupies 143–466 (LLGGFCHLIS…LPLVLGQITD (324 aa)). N-linked (GlcNAc...) asparagine glycosylation occurs at N321. A run of 3 helical transmembrane segments spans residues 324–344 (YSAL…TYAV), 409–429 (ILCV…ITYA), and 440–460 (IFSS…LPLV). The segment covering 510-533 (AADKEAEKVEKKANPRRTEPKSEA) has biased composition (basic and acidic residues). Positions 510 to 543 (AADKEAEKVEKKANPRRTEPKSEAPTDSAESDEP) are disordered. An ABC transporter 1 domain is found at 525–751 (RRTEPKSEAP…NDLFKQLMST (227 aa)). 563–570 (GTVGSGKS) is a binding site for ATP. Residue N604 is glycosylated (N-linked (GlcNAc...) asparagine). The segment at 751-787 (TASQDSKEDEEEATEVVEEEAEKQAQQEPTKPAAALM) is disordered. A compositionally biased stretch (acidic residues) spans 757–771 (KEDEEEATEVVEEEA). The next 2 helical transmembrane spans lie at 816 to 836 (LAIL…NLWL) and 852 to 872 (YIGI…IFST). Positions 816-1093 (LAILFLLAFA…TVRQLAEVEN (278 aa)) constitute an ABC transmembrane type-1 2 domain. A glycan (N-linked (GlcNAc...) asparagine) is linked at N880. Helical transmembrane passes span 930–947 (MYAI…LIIV), 951–970 (YFAI…SNYY), 1036–1056 (LSVR…VLVV), and 1065–1085 (SISG…QFTV). N1096, N1150, and N1154 each carry an N-linked (GlcNAc...) asparagine glycan. An ABC transporter 2 domain is found at 1131 to 1380 (ITFDNVAMRY…EDGIFRAMCE (250 aa)). ATP is bound at residue 1165–1172 (GRTGAGKS).

It belongs to the ABC transporter superfamily. ABCC family. Conjugate transporter (TC 3.A.1.208) subfamily.

It is found in the cell membrane. In terms of biological role, ABC-type transporter; part of the gene cluster that mediates the biosynthesis of cichorine, a phytotoxin active against knapweed, corn, and soybeans. CicA is probably involved in the secretion of cichorine. In Emericella nidulans (strain FGSC A4 / ATCC 38163 / CBS 112.46 / NRRL 194 / M139) (Aspergillus nidulans), this protein is ABC-type transporter cicA.